We begin with the raw amino-acid sequence, 187 residues long: Putative manganese efflux pump MntP (187 aa).

6 helical membrane passes run 3-23 (LSATLLLAFGMSMDAFAASIG), 41-61 (LIFGVIEAITPLVGWLLGLLA), 62-82 (TQFVLTWNHWIAFVLLVFLGG), 106-128 (LLVTTAFATSLDAMAVGVGLAFL), 142-162 (ATLIMSTLGMMVGRFIGPLLG), and 167-187 (ILGGVVLIGIGCQILWSHFAG).

Belongs to the MntP (TC 9.B.29) family.

The protein resides in the cell inner membrane. Probably functions as a manganese efflux pump. The polypeptide is Putative manganese efflux pump MntP (Cronobacter sakazakii (strain ATCC BAA-894) (Enterobacter sakazakii)).